The chain runs to 716 residues: DNA ligase (716 aa).

NAD(+)-binding positions include 47–51, 96–97, and E130; these read DATYD and SL. K132 functions as the N6-AMP-lysine intermediate in the catalytic mechanism. Residues R153, E190, K306, and K330 each coordinate NAD(+). 4 residues coordinate Zn(2+): C435, C438, C453, and C459. In terms of domain architecture, BRCT spans 638–716; it reads RSDSAVAGKT…EDEWLKLIEG (79 aa).

The protein belongs to the NAD-dependent DNA ligase family. LigA subfamily. The cofactor is Mg(2+). Requires Mn(2+) as cofactor.

It carries out the reaction NAD(+) + (deoxyribonucleotide)n-3'-hydroxyl + 5'-phospho-(deoxyribonucleotide)m = (deoxyribonucleotide)n+m + AMP + beta-nicotinamide D-nucleotide.. Functionally, DNA ligase that catalyzes the formation of phosphodiester linkages between 5'-phosphoryl and 3'-hydroxyl groups in double-stranded DNA using NAD as a coenzyme and as the energy source for the reaction. It is essential for DNA replication and repair of damaged DNA. In Nitrobacter winogradskyi (strain ATCC 25391 / DSM 10237 / CIP 104748 / NCIMB 11846 / Nb-255), this protein is DNA ligase.